The following is a 221-amino-acid chain: MHKITLIRLRGYREWTESLGPRREHIIQTVQAKIHSALWKYFTSIGALPHHLRYDFSLALTTNIETGRVGEVVAKIKRISPVDVEFCEGVGRTPREAYENCGATPGESAGVSVVAHMDVVDSTAATNKNGPLYVYRLIQRTISTIDSGCENLGCLAFYLGGDNIMLLLPNVDAIYQVLRDVELSVRVGVGVAKKPYNAFVKATRGLDYMRVKGRVGVKVVK.

It belongs to the archaeal-type GTP cyclohydrolase family.

The catalysed reaction is GTP + 3 H2O = 2-amino-5-formylamino-6-(5-phospho-D-ribosylamino)pyrimidin-4(3H)-one + 2 phosphate + 2 H(+). Catalyzes the formation of 2-amino-5-formylamino-6-ribofuranosylamino-4(3H)-pyrimidinone ribonucleotide monophosphate and inorganic phosphate from GTP. Also has an independent pyrophosphate phosphohydrolase activity. This is GTP cyclohydrolase III from Pyrobaculum aerophilum (strain ATCC 51768 / DSM 7523 / JCM 9630 / CIP 104966 / NBRC 100827 / IM2).